The following is a 204-amino-acid chain: Casparian strip membrane protein 3 (204 aa).

The Cytoplasmic segment spans residues 1 to 41; it reads MKNESTFIDVPADSSSAMKGKAPLIGVAKDHTASGSGGYNR. The chain crosses the membrane as a helical span at residues 42-62; the sequence is GLSIFDFLLRLAAIVAASVAA. Residues 63–92 lie on the Extracellular side of the membrane; that stretch reads GTMFTSDETLPFFTQFLQFQAGYDDLPTFQ. The helical transmembrane segment at 93-113 threads the bilayer; the sequence is FFVISMSLVSGYIVLSLPISV. Topologically, residues 114–125 are cytoplasmic; sequence VTIVRPLAAAPR. The chain crosses the membrane as a helical span at residues 126–146; the sequence is LLLLVLDTAVMGLTMAAASSA. The Extracellular portion of the chain corresponds to 147–204; that stretch reads AAISYVAHNGNQNTNWLPICQQFGDFCQKTSGGCGLFLCRRRVFHDPGCPLRSRSQRH.

It belongs to the Casparian strip membrane proteins (CASP) family. Homodimer and heterodimers.

Its subcellular location is the cell membrane. Its function is as follows. Regulates membrane-cell wall junctions and localized cell wall deposition. Required for establishment of the Casparian strip membrane domain (CSD) and the subsequent formation of Casparian strips, a cell wall modification of the root endodermis that determines an apoplastic barrier between the intraorganismal apoplasm and the extraorganismal apoplasm and prevents lateral diffusion. This Raphanus sativus (Radish) protein is Casparian strip membrane protein 3.